Consider the following 432-residue polypeptide: Adenylosuccinate synthetase (432 aa).

GTP contacts are provided by residues 13–19 and 41–43; these read GDEGKGK and GHT. Asp14 functions as the Proton acceptor in the catalytic mechanism. Residues Asp14 and Gly41 each coordinate Mg(2+). IMP contacts are provided by residues 14 to 17, 39 to 42, Thr130, Arg144, Gln225, Thr240, and Arg304; these read DEGK and NAGH. His42 functions as the Proton donor in the catalytic mechanism. Residue 300 to 306 coordinates substrate; it reads ATTGRRR. GTP-binding positions include Arg306, 332–334, and 415–417; these read KLD and STG.

Belongs to the adenylosuccinate synthetase family. As to quaternary structure, homodimer. Mg(2+) is required as a cofactor.

The protein localises to the cytoplasm. The catalysed reaction is IMP + L-aspartate + GTP = N(6)-(1,2-dicarboxyethyl)-AMP + GDP + phosphate + 2 H(+). Its pathway is purine metabolism; AMP biosynthesis via de novo pathway; AMP from IMP: step 1/2. In terms of biological role, plays an important role in the de novo pathway of purine nucleotide biosynthesis. Catalyzes the first committed step in the biosynthesis of AMP from IMP. The polypeptide is Adenylosuccinate synthetase (Pectobacterium carotovorum subsp. carotovorum (strain PC1)).